A 385-amino-acid polypeptide reads, in one-letter code: MINLHQPILGTEELDAIAEVFASNWIGLGPRTRTFEAEFAHHLGVDPEQVVFLNSGTAALFLTVQVLDLGPGDDVVLPSISFVAAANAIASSGARPVFCDVDPRTLNPTLDDVARAITPATKAVLLLHYGGSPGEVTAIADFCREKGLMLIEDSACAVASSVHGTACGTFGDLATWSFDAMKILVTGDGGMFYAADPELAHRARRLAYHGLEQMSGFDSAKSSNRWWDIRVEDIGQRLIGNDMTAALGSVQLRKLPEFINRRREIATQYDRLLSDVPGVLLPPTLPDGHVSSHYFYWVQLAPEIRDQVAQQMLERGIYTSYRYPPLHKVPIYRADCKLPSAEDACRRTLLLPLHPSLDDAEVRTVADEFQKAVEHHISQRSPLRK.

Position 182 is an N6-(pyridoxal phosphate)lysine (K182).

This sequence belongs to the DegT/DnrJ/EryC1 family. Homodimer. Requires pyridoxal 5'-phosphate as cofactor.

It catalyses the reaction dTDP-4-amino-2,3,4,6-tetradeoxy-alpha-D-erythro-hexopyranose + 2-oxoglutarate = dTDP-4-dehydro-2,3,6-trideoxy-alpha-D-hexopyranose + L-glutamate. Its function is as follows. Involved in the biosynthesis of forosamine ((4-dimethylamino)-2,3,4,6-tetradeoxy-alpha-D-threo-hexopyranose), a highly deoxygenated sugar component of several bioactive natural products such as the insecticidal spinosyns A and D. In the presence of pyridoxal 5'-phosphate (PLP) and alpha-ketoglutarate, catalyzes the C-4 transamination of dTDP-4-keto-2,3,6-trideoxy-alpha-D-glucose to yield dTDP-4-amino-2,3,4,6-tetradeoxy-alpha-D-glucose. It can also use pyruvate, but less efficiently than alpha-ketoglutarate. Also able to catalyze the C-4 transamination of dTDP-4-keto-2,6-dideoxy-alpha-D-glucose to yield dTDP-4-amino-2,4,6-trideoxy-D-glucose. This Saccharopolyspora spinosa protein is dTDP-4-dehydro-2,3,6-trideoxy-D-glucose 4-aminotransferase.